Consider the following 164-residue polypeptide: UPF0304 protein CKO_00501 (164 aa).

The protein belongs to the UPF0304 family.

This is UPF0304 protein CKO_00501 from Citrobacter koseri (strain ATCC BAA-895 / CDC 4225-83 / SGSC4696).